The primary structure comprises 475 residues: Ribulose bisphosphate carboxylase large chain (475 aa).

Positions 1-2 (MA) are excised as a propeptide. Pro-3 carries the N-acetylproline modification. Lys-14 is subject to N6,N6,N6-trimethyllysine. Residues Asn-123 and Thr-173 each coordinate substrate. Catalysis depends on Lys-175, which acts as the Proton acceptor. Lys-177 contacts substrate. Residues Lys-201, Asp-203, and Glu-204 each coordinate Mg(2+). At Lys-201 the chain carries N6-carboxylysine. Residue His-294 is the Proton acceptor of the active site. Substrate is bound by residues Arg-295, His-327, and Ser-379.

It belongs to the RuBisCO large chain family. Type I subfamily. Heterohexadecamer of 8 large chains and 8 small chains; disulfide-linked. The disulfide link is formed within the large subunit homodimers. Mg(2+) serves as cofactor. In terms of processing, the disulfide bond which can form in the large chain dimeric partners within the hexadecamer appears to be associated with oxidative stress and protein turnover.

It is found in the plastid. Its subcellular location is the chloroplast. It catalyses the reaction 2 (2R)-3-phosphoglycerate + 2 H(+) = D-ribulose 1,5-bisphosphate + CO2 + H2O. The enzyme catalyses D-ribulose 1,5-bisphosphate + O2 = 2-phosphoglycolate + (2R)-3-phosphoglycerate + 2 H(+). Its function is as follows. RuBisCO catalyzes two reactions: the carboxylation of D-ribulose 1,5-bisphosphate, the primary event in carbon dioxide fixation, as well as the oxidative fragmentation of the pentose substrate in the photorespiration process. Both reactions occur simultaneously and in competition at the same active site. The chain is Ribulose bisphosphate carboxylase large chain from Bryopsis maxima (Green alga).